The chain runs to 43 residues: Cuticle protein CP434 (43 aa).

Tandem repeats lie at residues 1-18 (ALVGPSGMILADGTPVQF) and 25-42 (VLTGPSGIVFSNGQNIQL).

As to expression, calcified shell.

The sequence is that of Cuticle protein CP434 from Cancer pagurus (Rock crab).